The following is a 302-amino-acid chain: HTH-type transcriptional regulator GbpR (302 aa).

An HTH lysR-type domain is found at 1 to 56 (MSHLRMLVMIEEHGQVSAAAAAMNMTQPAASRMLSEMEAIVKSPLCQRASRGVVLT). A DNA-binding region (H-T-H motif) is located at residues 16-35 (VSAAAAAMNMTQPAASRMLS).

This sequence belongs to the LysR transcriptional regulatory family.

Functionally, activator of the expression of chvE when bound to its inducer and represses its expression in the absence of inducer (L-arabinose, D-fucose or D-galactose). Negatively regulates its own expression. This Rhizobium radiobacter (Agrobacterium tumefaciens) protein is HTH-type transcriptional regulator GbpR (gbpR).